A 369-amino-acid polypeptide reads, in one-letter code: uncharacterized protein (369 aa).

It belongs to the myo-inositol 1-phosphate synthase family.

This is an uncharacterized protein from Mycobacterium leprae (strain TN).